The chain runs to 353 residues: Rhodopsin (353 aa).

Residues 1–36 lie on the Extracellular side of the membrane; sequence MNGTEGPYFYIPMLNTTGIVRSPYEYPQYYLVNPAA. N-linked (GlcNAc...) asparagine glycosylation is found at Asn2 and Asn15. Residues 37-61 form a helical membrane-spanning segment; that stretch reads YAALCAYMFLLILLGFPINFLTLYV. The Cytoplasmic segment spans residues 62 to 73; the sequence is TIEHKKLRTPLN. A helical transmembrane segment spans residues 74-96; that stretch reads YILLNLAVANLFMVFGGFTTTMY. The Extracellular segment spans residues 97 to 110; it reads TSMHGYFVLGRLGC. The cysteines at positions 110 and 187 are disulfide-linked. Residues 111-133 traverse the membrane as a helical segment; that stretch reads NLEGFFATLGGEIGLWSLVVLAV. Positions 134-136 match the 'Ionic lock' involved in activated form stabilization motif; that stretch reads ERW. At 134–152 the chain is on the cytoplasmic side; sequence ERWMVVCKPISNFRFTENH. Residues 153–173 form a helical membrane-spanning segment; sequence AIMGLGFTWFAASACAVPPLV. The Extracellular portion of the chain corresponds to 174–202; it reads GWSRYIPEGMQCSCGVDYYTRAEGFNNES. Asn200 is a glycosylation site (N-linked (GlcNAc...) asparagine). Residues 203–224 form a helical membrane-spanning segment; that stretch reads FVVYMFVCHFLIPLIVVFFCYG. The Cytoplasmic portion of the chain corresponds to 225-252; sequence RLLCAVKEAAAAQQESETTQRAEREVTR. A helical transmembrane segment spans residues 253-274; that stretch reads MVVIMVIAFLICWCPYAGVAWY. Residues 275-286 are Extracellular-facing; sequence IFSNQGSEFGPL. A helical membrane pass occupies residues 287-308; it reads FMTIPAFFAKSSSIYNPLIYIF. The residue at position 296 (Lys296) is an N6-(retinylidene)lysine. Residues 309-353 are Cytoplasmic-facing; the sequence is MNKQFRHCMITTLCCGKNPFEEEEGSTTTSKTEASSASSSSVSPA. Residues Cys322 and Cys323 are each lipidated (S-palmitoyl cysteine). A disordered region spans residues 329-353; that stretch reads EEEEGSTTTSKTEASSASSSSVSPA. Low complexity predominate over residues 334–353; the sequence is STTTSKTEASSASSSSVSPA.

It belongs to the G-protein coupled receptor 1 family. Opsin subfamily. In terms of processing, phosphorylated on some or all of the serine and threonine residues present in the C-terminal region. Contains one covalently linked retinal chromophore.

The protein localises to the membrane. Its subcellular location is the cell projection. It is found in the cilium. It localises to the photoreceptor outer segment. Its function is as follows. Photoreceptor required for image-forming vision at low light intensity. While most salt water fish species use retinal as chromophore, most freshwater fish use 3-dehydroretinal, or a mixture of retinal and 3-dehydroretinal. Light-induced isomerization of 11-cis to all-trans retinal triggers a conformational change that activates signaling via G-proteins. Subsequent receptor phosphorylation mediates displacement of the bound G-protein alpha subunit by arrestin and terminates signaling. This is Rhodopsin (rho) from Solea solea (Common sole).